A 323-amino-acid chain; its full sequence is tRNA U34 carboxymethyltransferase (323 aa).

Carboxy-S-adenosyl-L-methionine is bound by residues Lys91, Trp105, Lys110, Gly130, 152–154 (DPS), 181–182 (IE), Met196, Tyr200, and Arg315.

This sequence belongs to the class I-like SAM-binding methyltransferase superfamily. CmoB family. As to quaternary structure, homotetramer.

The catalysed reaction is carboxy-S-adenosyl-L-methionine + 5-hydroxyuridine(34) in tRNA = 5-carboxymethoxyuridine(34) in tRNA + S-adenosyl-L-homocysteine + H(+). Its function is as follows. Catalyzes carboxymethyl transfer from carboxy-S-adenosyl-L-methionine (Cx-SAM) to 5-hydroxyuridine (ho5U) to form 5-carboxymethoxyuridine (cmo5U) at position 34 in tRNAs. In Vibrio cholerae serotype O1 (strain ATCC 39541 / Classical Ogawa 395 / O395), this protein is tRNA U34 carboxymethyltransferase.